A 1118-amino-acid chain; its full sequence is Cytospin-A (1118 aa).

Positions 1–176 (MKKASRSVGS…SKSKSDNQIS (176 aa)) are disordered. A compositionally biased stretch (polar residues) spans 29-52 (ESGSSLSAVTKLSKPGTSASLLKT). Positions 79–119 (STCASTVSSTTGTTMSTLENKPRTVAGSTARRSTSSGTKES) are enriched in low complexity. Composition is skewed to basic and acidic residues over residues 120–131 (SSSRERIRDRSR) and 158–171 (TNPE…KSKS). Positions 193-281 (KTKDVEILHL…LNALGFSLEQ (89 aa)) form a coiled coil. 2 disordered regions span residues 299–324 (ITAG…GSME) and 359–391 (SSDD…NASE). The span at 359 to 373 (SSDDALDAPSSSESE) shows a compositional bias: low complexity. Coiled-coil stretches lie at residues 396-450 (CLTE…MESL) and 488-808 (RYME…RGRV). Disordered stretches follow at residues 856–879 (PSPA…PPAA) and 921–1002 (TSST…RKDP). Over residues 937–946 (ESAKSISVSR) the composition is skewed to low complexity. The span at 947–957 (RSSEEIKRDIS) shows a compositional bias: basic and acidic residues. Positions 972-991 (TTSPQLSLSSSPTASVTPTT) are enriched in low complexity. In terms of domain architecture, Calponin-homology (CH) spans 1012-1117 (GSKRNALLKW…YVTAIYKYFE (106 aa)).

Belongs to the cytospin-A family. May interact with both microtubules and actin cytoskeleton.

The protein resides in the cytoplasm. It is found in the cytoskeleton. Its subcellular location is the spindle. It localises to the cell junction. The protein localises to the gap junction. In terms of biological role, involved in cytokinesis and spindle organization. May play a role in actin cytoskeleton organization and microtubule stabilization and hence required for proper cell adhesion and migration. In Gallus gallus (Chicken), this protein is Cytospin-A (SPECC1L).